Reading from the N-terminus, the 351-residue chain is Ion-translocating oxidoreductase complex subunit D (351 aa).

4 helical membrane-spanning segments follow: residues 18–38, 40–60, 87–107, and 121–141; these read IMLL…YFFG, GSLI…GAVL, LPPL…IVIA, and PAMV…TSWL. Thr-185 is subject to FMN phosphoryl threonine. Transmembrane regions (helical) follow at residues 211–231, 241–261, 264–284, 298–318, and 320–340; these read VLAG…GLLL, IPVS…MIAP, FASP…FFIA, LIFG…GGYP, and GVAF…HYTQ.

This sequence belongs to the NqrB/RnfD family. The complex is composed of six subunits: RnfA, RnfB, RnfC, RnfD, RnfE and RnfG. It depends on FMN as a cofactor.

It is found in the cell inner membrane. Part of a membrane-bound complex that couples electron transfer with translocation of ions across the membrane. The polypeptide is Ion-translocating oxidoreductase complex subunit D (Yersinia pseudotuberculosis serotype O:1b (strain IP 31758)).